The chain runs to 201 residues: Prostamide/prostaglandin F synthase (201 aa).

Belongs to the peroxiredoxin-like PRXL2 family. Prostamide/prostaglandin F synthase subfamily.

The protein resides in the cytoplasm. The protein localises to the cytosol. The enzyme catalyses prostaglandin H2 + [thioredoxin]-dithiol = prostaglandin F2alpha + [thioredoxin]-disulfide. It carries out the reaction prostamide F2alpha + [thioredoxin]-disulfide = prostamide H2 + [thioredoxin]-dithiol. Its function is as follows. Catalyzes the reduction of prostaglandin-ethanolamide H(2) (prostamide H(2)) to prostamide F(2alpha) with NADPH as proton donor. Also able to reduce prostaglandin H(2) to prostaglandin F(2alpha). This chain is Prostamide/prostaglandin F synthase (prxl2b), found in Danio rerio (Zebrafish).